We begin with the raw amino-acid sequence, 1127 residues long: Myelin transcription factor 1 (1127 aa).

Disordered regions lie at residues 1–157 and 204–369; these read MSSE…KSSY and MGVN…TDES. Residues 21 to 64 form a CCHHC-type 1 zinc finger; that stretch reads PETTGADLSCPTPGCTGSGHVRGKYSRHRSLQSCPLAKKRKLED. Zn(2+)-binding residues include cysteine 30, cysteine 35, histidine 48, and cysteine 54. Positions 41–50 are enriched in basic residues; the sequence is VRGKYSRHRS. Basic and acidic residues-rich tracts occupy residues 61 to 71 and 82 to 103; these read KLEDAETEHLV and ALDE…KDVS. Acidic residues predominate over residues 104 to 117; the sequence is VSDESEGPLEEAEA. The segment covering 143-157 has biased composition (low complexity); the sequence is SNPTSSPSGFSKSSY. Positions 244–259 are enriched in basic and acidic residues; that stretch reads MVSEESSKQKGVLGHE. The segment covering 260-308 has biased composition (acidic residues); it reads EEGEEEEEDEEEEDEEEEEEGEEGEEEEEEEEEEEEEEDEEEEEEEEEA. The span at 348-360 shows a compositional bias: basic and acidic residues; the sequence is VRSDDDKDEDSRS. 2 consecutive CCHHC-type zinc fingers follow at residues 435-478 and 479-522; these read SRVE…PPEI and LAMH…KLAK. Residues cysteine 444, cysteine 449, histidine 462, cysteine 468, cysteine 488, cysteine 493, histidine 506, and cysteine 512 each coordinate Zn(2+). 2 disordered regions span residues 520–542 and 670–776; these read LAKS…SNSD and TLDL…EERK. Positions 528 to 542 are enriched in polar residues; the sequence is QLQTGDPPKNNSNSD. Residues 703-725 show a composition bias toward low complexity; that stretch reads SQRQSSTSAPSSSMTSPQSSQAS. Over residues 726–735 the composition is skewed to basic and acidic residues; it reads RQDEWDRPLD. Positions 761-772 are enriched in acidic residues; that stretch reads EADDQEVSEENF. CCHHC-type zinc fingers lie at residues 793–836, 837–880, 886–929, and 939–982; these read KDIK…LRNL, MAAH…GLKV, DKED…QKEG, and KSLK…GKKG. Zn(2+) contacts are provided by cysteine 802, cysteine 807, histidine 820, cysteine 826, cysteine 846, cysteine 851, histidine 864, cysteine 870, cysteine 895, cysteine 900, histidine 913, cysteine 919, cysteine 948, cysteine 953, histidine 966, and cysteine 972.

Belongs to the MYT1 family. Interacts with STEAP3. As to expression, isoform 1 is more predominant than isoform 2 at all stages of development and adulthood. Expressed in differentiated neurons especially at higher levels in newly generated ones.

The protein resides in the nucleus. Its function is as follows. Binds to the promoter region of genes encoding proteolipid proteins of the central nervous system. May play a role in the development of neurons and oligodendroglia in the CNS. May regulate a critical transition point in oligodendrocyte lineage development by modulating oligodendrocyte progenitor proliferation relative to terminal differentiation and up-regulation of myelin gene transcription. In Mus musculus (Mouse), this protein is Myelin transcription factor 1 (Myt1).